A 528-amino-acid chain; its full sequence is Probable histone-arginine methyltransferase 1.4 (528 aa).

Met1 bears the N-acetylmethionine mark. The 316-residue stretch at 144 to 459 (EAASAKMYFH…QSYTINLTLS (316 aa)) folds into the SAM-dependent MTase PRMT-type domain. Residues Gln161, Arg170, Gly194, Glu216, and Glu246 each contribute to the S-adenosyl-L-methionine site. Catalysis depends on residues Glu260 and Glu269. Residue Thr274 participates in S-adenosyl-L-methionine binding.

The protein belongs to the class I-like SAM-binding methyltransferase superfamily. Protein arginine N-methyltransferase family.

It localises to the nucleus. Its subcellular location is the cytoplasm. It carries out the reaction L-arginyl-[protein] + 2 S-adenosyl-L-methionine = N(omega),N(omega)-dimethyl-L-arginyl-[protein] + 2 S-adenosyl-L-homocysteine + 2 H(+). Its function is as follows. Methylates (mono- and asymmetric dimethylation) the guanidino nitrogens of arginyl residues in several proteins involved in DNA packaging, transcription regulation, and mRNA stability. Recruited to promoters upon gene activation, methylates histone H3 and activates transcription via chromatin remodeling. This is Probable histone-arginine methyltransferase 1.4 (PRMT14) from Arabidopsis thaliana (Mouse-ear cress).